The primary structure comprises 159 residues: Cytochrome c-type biogenesis protein CcmE (159 aa).

Residues 1–8 lie on the Cytoplasmic side of the membrane; it reads MNIRRKNR. A helical; Signal-anchor for type II membrane protein membrane pass occupies residues 9-29; that stretch reads LWIACAVLAGLALTIGLVLYA. The Periplasmic portion of the chain corresponds to 30–159; sequence LRSNIDLFYT…PASVYKDPAS (130 aa). Heme-binding residues include H130 and Y134. Residues 132-147 are compositionally biased toward basic and acidic residues; sequence ENYTPPEVEKAMEANH. Residues 132–159 form a disordered region; it reads ENYTPPEVEKAMEANHRRPASVYKDPAS.

Belongs to the CcmE/CycJ family.

Its subcellular location is the cell inner membrane. Heme chaperone required for the biogenesis of c-type cytochromes. Transiently binds heme delivered by CcmC and transfers the heme to apo-cytochromes in a process facilitated by CcmF and CcmH. In Escherichia coli (strain 55989 / EAEC), this protein is Cytochrome c-type biogenesis protein CcmE.